A 473-amino-acid chain; its full sequence is Glutamate--tRNA ligase (473 aa).

Residues 11–21 (PSPTGFLHIGG) carry the 'HIGH' region motif. The 'KMSKS' region motif lies at 240–244 (KLSKR). K243 contributes to the ATP binding site.

The protein belongs to the class-I aminoacyl-tRNA synthetase family. Glutamate--tRNA ligase type 1 subfamily. In terms of assembly, monomer.

The protein resides in the cytoplasm. The catalysed reaction is tRNA(Glu) + L-glutamate + ATP = L-glutamyl-tRNA(Glu) + AMP + diphosphate. Functionally, catalyzes the attachment of glutamate to tRNA(Glu) in a two-step reaction: glutamate is first activated by ATP to form Glu-AMP and then transferred to the acceptor end of tRNA(Glu). The sequence is that of Glutamate--tRNA ligase from Rhodopseudomonas palustris (strain TIE-1).